A 713-amino-acid chain; its full sequence is Cyclomaltodextrin glucanotransferase (713 aa).

Residues M1–A27 form the signal peptide. The segment at A28 to P165 is A1. D54, N56, N59, and N60 together coordinate Ca(2+). A disulfide bond links C70 and C77. Positions 78 and 80 each coordinate Ca(2+). Residue Y127 to W128 coordinates substrate. Residue N166 coordinates Ca(2+). The segment at N166 to H229 is b. Substrate contacts are provided by residues H167 and S172–D174. Residue I217 participates in Ca(2+) binding. N220–D223 provides a ligand contact to substrate. A Ca(2+)-binding site is contributed by D226. Residues N230–Y433 form an A2 region. R254 contributes to the substrate binding site. The active-site Nucleophile is the D256. K259–H260 contacts substrate. A Ca(2+)-binding site is contributed by H260. The active-site Proton donor is E284. Ca(2+) is bound at residue A342. The substrate site is built by H354, D398, and R402. The interval G434–A522 is c. The interval T523–L609 is d. The 82-residue stretch at P526 to E607 folds into the IPT/TIG domain. D604 contributes to the Ca(2+) binding site. A CBM20 domain is found at V608 to P713. An e region spans residues S610 to P713.

This sequence belongs to the glycosyl hydrolase 13 family. As to quaternary structure, monomer. It depends on Ca(2+) as a cofactor.

It localises to the secreted. It carries out the reaction Cyclizes part of a (1-&gt;4)-alpha-D-glucan chain by formation of a (1-&gt;4)-alpha-D-glucosidic bond.. The polypeptide is Cyclomaltodextrin glucanotransferase (cgt) (Niallia circulans (Bacillus circulans)).